Here is a 199-residue protein sequence, read N- to C-terminus: FMN-dependent NADH:quinone oxidoreductase (199 aa).

Residues Ser-9, 15–17, and 95–98 each bind FMN; these read SNS and MYNF.

It belongs to the azoreductase type 1 family. Homodimer. Requires FMN as cofactor.

It carries out the reaction 2 a quinone + NADH + H(+) = 2 a 1,4-benzosemiquinone + NAD(+). It catalyses the reaction N,N-dimethyl-1,4-phenylenediamine + anthranilate + 2 NAD(+) = 2-(4-dimethylaminophenyl)diazenylbenzoate + 2 NADH + 2 H(+). Its function is as follows. Quinone reductase that provides resistance to thiol-specific stress caused by electrophilic quinones. Also exhibits azoreductase activity. Catalyzes the reductive cleavage of the azo bond in aromatic azo compounds to the corresponding amines. The sequence is that of FMN-dependent NADH:quinone oxidoreductase from Aromatoleum aromaticum (strain DSM 19018 / LMG 30748 / EbN1) (Azoarcus sp. (strain EbN1)).